The chain runs to 178 residues: Alkyl hydroperoxide reductase AhpD (178 aa).

The active-site Proton donor is the cysteine 130. Cysteine 130 and cysteine 133 are disulfide-bonded. The active-site Cysteine sulfenic acid (-SOH) intermediate is the cysteine 133.

The protein belongs to the AhpD family. In terms of assembly, homotrimer.

The enzyme catalyses N(6)-[(R)-dihydrolipoyl]-L-lysyl-[lipoyl-carrier protein] + a hydroperoxide = N(6)-[(R)-lipoyl]-L-lysyl-[lipoyl-carrier protein] + an alcohol + H2O. In terms of biological role, antioxidant protein with alkyl hydroperoxidase activity. Required for the reduction of the AhpC active site cysteine residues and for the regeneration of the AhpC enzyme activity. This is Alkyl hydroperoxide reductase AhpD from Mycolicibacterium paratuberculosis (strain ATCC BAA-968 / K-10) (Mycobacterium paratuberculosis).